The chain runs to 355 residues: S-adenosylmethionine:tRNA ribosyltransferase-isomerase (355 aa).

Belongs to the QueA family. Monomer.

It is found in the cytoplasm. The enzyme catalyses 7-aminomethyl-7-carbaguanosine(34) in tRNA + S-adenosyl-L-methionine = epoxyqueuosine(34) in tRNA + adenine + L-methionine + 2 H(+). It functions in the pathway tRNA modification; tRNA-queuosine biosynthesis. Transfers and isomerizes the ribose moiety from AdoMet to the 7-aminomethyl group of 7-deazaguanine (preQ1-tRNA) to give epoxyqueuosine (oQ-tRNA). In Burkholderia ambifaria (strain MC40-6), this protein is S-adenosylmethionine:tRNA ribosyltransferase-isomerase.